Reading from the N-terminus, the 143-residue chain is Shadow of prion protein (143 aa).

The first 24 residues, Met-1–Ala-24, serve as a signal peptide directing secretion. Asn-103 is a glycosylation site (N-linked (GlcNAc...) asparagine). A lipid anchor (GPI-anchor amidated serine) is attached at Ser-117. A propeptide spans Gly-118–Pro-143 (removed in mature form).

The protein belongs to the SPRN family. In terms of processing, N-glycosylated. In terms of tissue distribution, mainly expressed in brain.

Its subcellular location is the cell membrane. Functionally, prion-like protein that has PrP(C)-like neuroprotective activity. May act as a modulator for the biological actions of normal and abnormal PrP. The chain is Shadow of prion protein (SPRN) from Bos taurus (Bovine).